The chain runs to 367 residues: Anthranilate phosphoribosyltransferase (367 aa).

Residues 1 to 17 are compositionally biased toward low complexity; sequence MVLSSEASSAADHSAAA. The disordered stretch occupies residues 1–22; it reads MVLSSEASSAADHSAAAPIPTS. 5-phospho-alpha-D-ribose 1-diphosphate is bound by residues Gly104, 107-108, Thr112, 114-117, 132-140, and Gly144; these read GD, NLST, and KHGNRAASS. Gly104 serves as a coordination point for anthranilate. Residue Ser116 coordinates Mg(2+). Residue Asn135 coordinates anthranilate. Arg190 provides a ligand contact to anthranilate. Residues Asp248 and Glu249 each contribute to the Mg(2+) site.

Belongs to the anthranilate phosphoribosyltransferase family. As to quaternary structure, homodimer. The cofactor is Mg(2+).

It catalyses the reaction N-(5-phospho-beta-D-ribosyl)anthranilate + diphosphate = 5-phospho-alpha-D-ribose 1-diphosphate + anthranilate. It participates in amino-acid biosynthesis; L-tryptophan biosynthesis; L-tryptophan from chorismate: step 2/5. In terms of biological role, catalyzes the transfer of the phosphoribosyl group of 5-phosphorylribose-1-pyrophosphate (PRPP) to anthranilate to yield N-(5'-phosphoribosyl)-anthranilate (PRA). The chain is Anthranilate phosphoribosyltransferase from Mycobacterium ulcerans (strain Agy99).